Consider the following 90-residue polypeptide: DNA-directed RNA polymerase subunit Rpo11 (90 aa).

This sequence belongs to the archaeal Rpo11/eukaryotic RPB11/RPC19 RNA polymerase subunit family. As to quaternary structure, part of the 13-subunit RNA polymerase complex.

The protein resides in the cytoplasm. It catalyses the reaction RNA(n) + a ribonucleoside 5'-triphosphate = RNA(n+1) + diphosphate. DNA-dependent RNA polymerase (RNAP) catalyzes the transcription of DNA into RNA using the four ribonucleoside triphosphates as substrates. The polypeptide is DNA-directed RNA polymerase subunit Rpo11 (Sulfolobus acidocaldarius (strain ATCC 33909 / DSM 639 / JCM 8929 / NBRC 15157 / NCIMB 11770)).